Reading from the N-terminus, the 459-residue chain is Exodeoxyribonuclease 7 large subunit (459 aa).

The protein belongs to the XseA family. As to quaternary structure, heterooligomer composed of large and small subunits.

Its subcellular location is the cytoplasm. It carries out the reaction Exonucleolytic cleavage in either 5'- to 3'- or 3'- to 5'-direction to yield nucleoside 5'-phosphates.. Bidirectionally degrades single-stranded DNA into large acid-insoluble oligonucleotides, which are then degraded further into small acid-soluble oligonucleotides. The sequence is that of Exodeoxyribonuclease 7 large subunit from Pseudomonas fluorescens (strain SBW25).